Here is a 486-residue protein sequence, read N- to C-terminus: Malonate-semialdehyde dehydrogenase 2 (486 aa).

Phenylalanine 154, lysine 178, glutamate 181, arginine 182, and serine 231 together coordinate NAD(+). The Nucleophile role is filled by cysteine 286. Glutamate 385 lines the NAD(+) pocket.

This sequence belongs to the aldehyde dehydrogenase family. IolA subfamily. In terms of assembly, homotetramer.

It carries out the reaction 3-oxopropanoate + NAD(+) + CoA + H2O = hydrogencarbonate + acetyl-CoA + NADH + H(+). The catalysed reaction is 2-methyl-3-oxopropanoate + NAD(+) + CoA + H2O = propanoyl-CoA + hydrogencarbonate + NADH + H(+). The protein operates within polyol metabolism; myo-inositol degradation into acetyl-CoA; acetyl-CoA from myo-inositol: step 7/7. Catalyzes the oxidation of malonate semialdehyde (MSA) and methylmalonate semialdehyde (MMSA) into acetyl-CoA and propanoyl-CoA, respectively. Is involved in a myo-inositol catabolic pathway. Bicarbonate, and not CO2, is the end-product of the enzymatic reaction. This is Malonate-semialdehyde dehydrogenase 2 from Shouchella clausii (strain KSM-K16) (Alkalihalobacillus clausii).